Consider the following 407-residue polypeptide: Carbamoyl phosphate synthase small chain (407 aa).

Positions 1–205 are CPSase; that stretch reads MTETTPKTAP…LQDGYGEQDA (205 aa). 3 residues coordinate L-glutamine: S60, G257, and G259. In terms of domain architecture, Glutamine amidotransferase type-1 spans 209–397; that stretch reads HVVALDFGVK…INLIRERKGQ (189 aa). The active-site Nucleophile is the C286. The L-glutamine site is built by L287, Q290, N328, G330, and F331. Residues H370 and E372 contribute to the active site.

This sequence belongs to the CarA family. In terms of assembly, composed of two chains; the small (or glutamine) chain promotes the hydrolysis of glutamine to ammonia, which is used by the large (or ammonia) chain to synthesize carbamoyl phosphate. Tetramer of heterodimers (alpha,beta)4.

It catalyses the reaction hydrogencarbonate + L-glutamine + 2 ATP + H2O = carbamoyl phosphate + L-glutamate + 2 ADP + phosphate + 2 H(+). It carries out the reaction L-glutamine + H2O = L-glutamate + NH4(+). The protein operates within amino-acid biosynthesis; L-arginine biosynthesis; carbamoyl phosphate from bicarbonate: step 1/1. Its pathway is pyrimidine metabolism; UMP biosynthesis via de novo pathway; (S)-dihydroorotate from bicarbonate: step 1/3. In terms of biological role, small subunit of the glutamine-dependent carbamoyl phosphate synthetase (CPSase). CPSase catalyzes the formation of carbamoyl phosphate from the ammonia moiety of glutamine, carbonate, and phosphate donated by ATP, constituting the first step of 2 biosynthetic pathways, one leading to arginine and/or urea and the other to pyrimidine nucleotides. The small subunit (glutamine amidotransferase) binds and cleaves glutamine to supply the large subunit with the substrate ammonia. The sequence is that of Carbamoyl phosphate synthase small chain from Brucella abortus (strain S19).